An 845-amino-acid polypeptide reads, in one-letter code: uncharacterized protein (845 aa).

Disordered regions lie at residues 17-37 and 550-573; these read RRKQDALHSPSLNMDKKNDQP and AATEAEVEDQNSERNDDNALNESL. Residues 622 to 707 adopt a coiled-coil conformation; sequence LSEQRFEREN…ELKKSNEHTR (86 aa).

This is an uncharacterized protein from Saccharum officinarum (Sugarcane).